A 357-amino-acid chain; its full sequence is DNA replication and repair protein RecF (357 aa).

Position 31–38 (Gly31–Thr38) interacts with ATP.

Belongs to the RecF family.

Its subcellular location is the cytoplasm. Functionally, the RecF protein is involved in DNA metabolism; it is required for DNA replication and normal SOS inducibility. RecF binds preferentially to single-stranded, linear DNA. It also seems to bind ATP. In Coxiella burnetii (strain CbuG_Q212) (Coxiella burnetii (strain Q212)), this protein is DNA replication and repair protein RecF.